The sequence spans 362 residues: MKANFSLATISKNITSSLHVGFVNISSNESTFNCSHKPSDKHLDAIPVLYYIIFGVGFLVNTIVVTLFCCQKGPKKVSSIYIFNLAVADLLLLATLPLWATYYSHRYDWIFGPVMCKVFGSFLTLNMFASIFFITCMSVDRYQSVIYPFLSQRRNPWQASYIVPLVWCMACLSSLPTFYFRDVRTIEYLGVNACIMAFPPEKYAQWSAGIALMKNILGFIIPLIFIATCYFGIRKHLLKTNSYGKNRITRDQVLKMAAAVVLAFIICWLPFHVLTFLDALAWMGVINSCEVIAVIDLALPFAILLGFTNSCINPFLYCFVGNRFQQKLRRVFRVPITWLQGKRENGSCGKSSSFREMETFVS.

Residues 1-44 (MKANFSLATISKNITSSLHVGFVNISSNESTFNCSHKPSDKHLD) lie on the Extracellular side of the membrane. N-linked (GlcNAc...) asparagine glycosylation is found at N4, N13, N24, N28, and N33. Intrachain disulfides connect C34–C289 and C116–C194. The helical transmembrane segment at 45–69 (AIPVLYYIIFGVGFLVNTIVVTLFC) threads the bilayer. Over 70-79 (CQKGPKKVSS) the chain is Cytoplasmic. The helical transmembrane segment at 80 to 103 (IYIFNLAVADLLLLATLPLWATYY) threads the bilayer. Y102 and Y103 together coordinate angiotensin II. Over 104 to 113 (SHRYDWIFGP) the chain is Extracellular. The chain crosses the membrane as a helical span at residues 114–139 (VMCKVFGSFLTLNMFASIFFITCMSV). Residues 140 to 158 (DRYQSVIYPFLSQRRNPWQ) lie on the Cytoplasmic side of the membrane. The chain crosses the membrane as a helical span at residues 159-180 (ASYIVPLVWCMACLSSLPTFYF). 3 residues coordinate angiotensin II: R181, Y203, and K214. Topologically, residues 181–205 (RDVRTIEYLGVNACIMAFPPEKYAQ) are extracellular. The chain crosses the membrane as a helical span at residues 206-231 (WSAGIALMKNILGFIIPLIFIATCYF). Residues 232-256 (GIRKHLLKTNSYGKNRITRDQVLKM) lie on the Cytoplasmic side of the membrane. Residues 257–280 (AAAVVLAFIICWLPFHVLTFLDAL) traverse the membrane as a helical segment. Position 278 (D278) interacts with angiotensin II. Topologically, residues 281 to 293 (AWMGVINSCEVIA) are extracellular. Residues 294-319 (VIDLALPFAILLGFTNSCINPFLYCF) form a helical membrane-spanning segment. Residue D296 coordinates angiotensin II. At 320–362 (VGNRFQQKLRRVFRVPITWLQGKRENGSCGKSSSFREMETFVS) the chain is on the cytoplasmic side. The tract at residues 323-332 (RFQQKLRRVF) is helix VIII.

Belongs to the G-protein coupled receptor 1 family. Interacts with MTUS1.

It localises to the cell membrane. In terms of biological role, receptor for angiotensin II, a vasoconstricting peptide. Signals primarily via a non-canonical G-protein- and beta-arrestin independent pathways. Cooperates with MTUS1 to inhibit ERK2 activation and cell proliferation. In Ovis aries (Sheep), this protein is Type-2 angiotensin II receptor (AGTR2).